A 103-amino-acid chain; its full sequence is MTKLKIKSGDTVRVIAGDHKGQEGKVQKVLIEKNKAIVEGVNMISKHEKPSASNPQGGIKEKEAPIHISNLSLIDKNGDTTRVGYKEEDGKKVRFSKKSNEVI.

This sequence belongs to the universal ribosomal protein uL24 family. As to quaternary structure, part of the 50S ribosomal subunit.

Functionally, one of two assembly initiator proteins, it binds directly to the 5'-end of the 23S rRNA, where it nucleates assembly of the 50S subunit. One of the proteins that surrounds the polypeptide exit tunnel on the outside of the subunit. The chain is Large ribosomal subunit protein uL24 from Christiangramia forsetii (strain DSM 17595 / CGMCC 1.15422 / KT0803) (Gramella forsetii).